A 250-amino-acid chain; its full sequence is Ubiquinone/menaquinone biosynthesis C-methyltransferase UbiE (250 aa).

Residues T73, D94, 122–123 (NA), and S139 each bind S-adenosyl-L-methionine.

Belongs to the class I-like SAM-binding methyltransferase superfamily. MenG/UbiE family.

The catalysed reaction is a 2-demethylmenaquinol + S-adenosyl-L-methionine = a menaquinol + S-adenosyl-L-homocysteine + H(+). It carries out the reaction a 2-methoxy-6-(all-trans-polyprenyl)benzene-1,4-diol + S-adenosyl-L-methionine = a 5-methoxy-2-methyl-3-(all-trans-polyprenyl)benzene-1,4-diol + S-adenosyl-L-homocysteine + H(+). It participates in quinol/quinone metabolism; menaquinone biosynthesis; menaquinol from 1,4-dihydroxy-2-naphthoate: step 2/2. The protein operates within cofactor biosynthesis; ubiquinone biosynthesis. Functionally, methyltransferase required for the conversion of demethylmenaquinol (DMKH2) to menaquinol (MKH2) and the conversion of 2-polyprenyl-6-methoxy-1,4-benzoquinol (DDMQH2) to 2-polyprenyl-3-methyl-6-methoxy-1,4-benzoquinol (DMQH2). The sequence is that of Ubiquinone/menaquinone biosynthesis C-methyltransferase UbiE from Francisella tularensis subsp. holarctica (strain FTNF002-00 / FTA).